Here is an 81-residue protein sequence, read N- to C-terminus: Photosystem I iron-sulfur center (81 aa).

2 consecutive 4Fe-4S ferredoxin-type domains span residues 2 to 31 (SHSV…MVSW) and 39 to 68 (IASA…VRVY). Positions 11, 14, 17, 21, 48, 51, 54, and 58 each coordinate [4Fe-4S] cluster.

In terms of assembly, the eukaryotic PSI reaction center is composed of at least 11 subunits. The cofactor is [4Fe-4S] cluster.

Its subcellular location is the plastid. The protein localises to the chloroplast thylakoid membrane. It catalyses the reaction reduced [plastocyanin] + hnu + oxidized [2Fe-2S]-[ferredoxin] = oxidized [plastocyanin] + reduced [2Fe-2S]-[ferredoxin]. Apoprotein for the two 4Fe-4S centers FA and FB of photosystem I (PSI); essential for photochemical activity. FB is the terminal electron acceptor of PSI, donating electrons to ferredoxin. The C-terminus interacts with PsaA/B/D and helps assemble the protein into the PSI complex. Required for binding of PsaD and PsaE to PSI. PSI is a plastocyanin/cytochrome c6-ferredoxin oxidoreductase, converting photonic excitation into a charge separation, which transfers an electron from the donor P700 chlorophyll pair to the spectroscopically characterized acceptors A0, A1, FX, FA and FB in turn. In Rhodomonas salina (Cryptomonas salina), this protein is Photosystem I iron-sulfur center.